The sequence spans 547 residues: Malolactic enzyme (547 aa).

Tyr-92 functions as the Proton donor in the catalytic mechanism. The Proton acceptor role is filled by Lys-165. Lys-165 is a substrate binding site. Positions 236, 237, and 260 each coordinate Mn(2+). NAD(+) is bound by residues 293 to 296 (AGTA), Asn-405, and Asn-450. Residue Asn-450 coordinates substrate.

It belongs to the malic enzymes family. As to quaternary structure, homodimer. Requires Mn(2+) as cofactor. NAD(+) is required as a cofactor.

It catalyses the reaction (S)-malate + H(+) = (S)-lactate + CO2. Its function is as follows. Involved in the malolactic fermentation (MLF) of wine, which results in a natural decrease in acidity and favorable changes in wine flavors. Catalyzes the decarboxylation of L-malate to L-lactate. This Lactiplantibacillus plantarum (strain ATCC BAA-793 / NCIMB 8826 / WCFS1) (Lactobacillus plantarum) protein is Malolactic enzyme.